Consider the following 82-residue polypeptide: MKAYELVVYPERCHGCGNCVVSCPVNAKHPETWGGKGPYSDDVVIRVENGVVTVVNQDLCGGCGACIEACPVNAIELVFKRK.

2 4Fe-4S ferredoxin-type domains span residues 4–33 (YELV…PETW) and 51–80 (VVTV…LVFK). [4Fe-4S] cluster contacts are provided by Cys-13, Cys-16, Cys-19, Cys-23, Cys-60, Cys-63, Cys-66, and Cys-70.

It depends on [4Fe-4S] cluster as a cofactor.

The sequence is that of Polyferredoxin protein FwdG (fwdG) from Methanocaldococcus jannaschii (strain ATCC 43067 / DSM 2661 / JAL-1 / JCM 10045 / NBRC 100440) (Methanococcus jannaschii).